A 168-amino-acid chain; its full sequence is GTP-dependent dephospho-CoA kinase (168 aa).

The GTP site is built by aspartate 49, valine 50, valine 51, aspartate 68, lysine 70, and glutamate 120.

It belongs to the GTP-dependent DPCK family.

It carries out the reaction 3'-dephospho-CoA + GTP = GDP + CoA + H(+). It functions in the pathway cofactor biosynthesis; coenzyme A biosynthesis. Functionally, catalyzes the GTP-dependent phosphorylation of the 3'-hydroxyl group of dephosphocoenzyme A to form coenzyme A (CoA). The chain is GTP-dependent dephospho-CoA kinase from Pyrobaculum calidifontis (strain DSM 21063 / JCM 11548 / VA1).